The chain runs to 679 residues: Genome polyprotein (679 aa).

A propeptide spans Ser-1–Ala-14 (ER anchor for the capsid protein C, removed in mature form by serine protease NS3). Residues Ala-2–Gly-22 traverse the membrane as a helical segment. Over Glu-23–Glu-138 the chain is Extracellular. An N-linked (GlcNAc...) asparagine; by host glycan is attached at Asn-83. The chain crosses the membrane as a helical span at residues Ile-139 to Gly-159. The Cytoplasmic portion of the chain corresponds to Thr-160–Arg-165. A helical transmembrane segment spans residues Ala-166–Thr-180. The Extracellular segment spans residues Met-181 to Gly-625. 4 cysteine pairs are disulfide-bonded: Cys-183/Cys-210, Cys-240/Cys-301, Cys-254/Cys-285, and Cys-272/Cys-296. Asn-247 is a glycosylation site (N-linked (GlcNAc...) asparagine; by host). Residues Asp-278–Gly-291 form a fusion peptide region. Asn-333 is a glycosylation site (N-linked (GlcNAc...) asparagine; by host). 2 disulfide bridges follow: Cys-365–Cys-465 and Cys-482–Cys-513. The helical transmembrane segment at Ala-626–Ile-646 threads the bilayer. Residues Gly-647–Ser-652 are Cytoplasmic-facing. The chain crosses the membrane as a helical span at residues Thr-653–Val-673. The Extracellular segment spans residues Gln-674–Cys-679.

In terms of assembly, forms heterodimers with envelope protein E in the endoplasmic reticulum and Golgi. As to quaternary structure, homodimer; in the endoplasmic reticulum and Golgi. Interacts with protein prM. Interacts with non-structural protein 1. In terms of processing, cleaved in post-Golgi vesicles by a host furin, releasing the mature small envelope protein M, and peptide pr. This cleavage is incomplete as up to 30% of viral particles still carry uncleaved prM. Post-translationally, N-glycosylated. N-glycosylated. The excreted form is glycosylated and this is required for efficient secretion of the protein from infected cells. In terms of processing, specific enzymatic cleavages in vivo yield mature proteins. Cleavages in the lumen of endoplasmic reticulum are performed by host signal peptidase, wereas cleavages in the cytoplasmic side are performed by serine protease NS3. Signal cleavage at the 2K-4B site requires a prior NS3 protease-mediated cleavage at the 4A-2K site.

The protein localises to the secreted. Its subcellular location is the virion membrane. The protein resides in the host endoplasmic reticulum membrane. Functionally, prevents premature fusion activity of envelope proteins in trans-Golgi by binding to envelope protein E at pH6.0. After virion release in extracellular space, gets dissociated from E dimers. Its function is as follows. Acts as a chaperone for envelope protein E during intracellular virion assembly by masking and inactivating envelope protein E fusion peptide. prM is the only viral peptide matured by host furin in the trans-Golgi network probably to avoid catastrophic activation of the viral fusion activity in acidic Golgi compartment prior to virion release. prM-E cleavage is inefficient, and many virions are only partially matured. These uncleaved prM would play a role in immune evasion. In terms of biological role, may play a role in virus budding. Exerts cytotoxic effects by activating a mitochondrial apoptotic pathway through M ectodomain. May display a viroporin activity. Binds to host cell surface receptor and mediates fusion between viral and cellular membranes. Envelope protein is synthesized in the endoplasmic reticulum in the form of heterodimer with protein prM. They play a role in virion budding in the ER, and the newly formed immature particle is covered with 60 spikes composed of heterodimer between precursor prM and envelope protein E. The virion is transported to the Golgi apparatus where the low pH causes dissociation of PrM-E heterodimers and formation of E homodimers. prM-E cleavage is inefficient, and many virions are only partially matured. These uncleaved prM would play a role in immune evasion. Functionally, involved in immune evasion, pathogenesis and viral replication. Once cleaved off the polyprotein, is targeted to three destinations: the viral replication cycle, the plasma membrane and the extracellular compartment. Essential for viral replication. Required for formation of the replication complex and recruitment of other non-structural proteins to the ER-derived membrane structures. Excreted as a hexameric lipoparticle that plays a role against host immune response. Antagonizing the complement function. Binds to the host macrophages and dendritic cells. Inhibits signal transduction originating from Toll-like receptor 3 (TLR3). Its function is as follows. Disrupts the host endothelial glycocalyx layer of host pulmonary microvascular endothelial cells, inducing degradation of sialic acid and shedding of heparan sulfate proteoglycans. NS1 induces expression of sialidases, heparanase, and activates cathepsin L, which activates heparanase via enzymatic cleavage. These effects are probably linked to the endothelial hyperpermeability observed in severe dengue disease. This chain is Genome polyprotein, found in Dengue virus type 2 (strain Thailand/PUO-218/1980) (DENV-2).